Here is a 198-residue protein sequence, read N- to C-terminus: Translation machinery-associated protein 22 (198 aa).

The SUI1 domain maps to I100 to V171.

It belongs to the DENR family. As to quaternary structure, interacts with the 40S ribosomal subunit.

The protein localises to the cytoplasm. In Cryptococcus neoformans var. neoformans serotype D (strain B-3501A) (Filobasidiella neoformans), this protein is Translation machinery-associated protein 22 (TMA22).